Consider the following 449-residue polypeptide: Putative F-box/LRR-repeat protein At3g44090 (449 aa).

Positions Leu23–Glu77 constitute an F-box domain. LRR repeat units follow at residues Tyr133 to Thr163, Tyr186 to His212, Phe214 to Ile231, Thr247 to Leu278, Arg286 to Tyr311, and Ser320 to Gly345.

The sequence is that of Putative F-box/LRR-repeat protein At3g44090 from Arabidopsis thaliana (Mouse-ear cress).